The primary structure comprises 311 residues: Malate dehydrogenase (311 aa).

NAD(+) contacts are provided by residues 7–13 and D34; that span reads GAAGGIG. Substrate contacts are provided by R81 and R87. NAD(+)-binding positions include N94 and 117–119; that span reads ITN. The substrate site is built by N119 and R153. Catalysis depends on H177, which acts as the Proton acceptor. Position 227 (M227) interacts with NAD(+).

This sequence belongs to the LDH/MDH superfamily. MDH type 1 family. Homodimer.

It catalyses the reaction (S)-malate + NAD(+) = oxaloacetate + NADH + H(+). Catalyzes the reversible oxidation of malate to oxaloacetate. The protein is Malate dehydrogenase of Shewanella frigidimarina (strain NCIMB 400).